A 156-amino-acid chain; its full sequence is Small ribosomal subunit protein uS7 (156 aa).

This sequence belongs to the universal ribosomal protein uS7 family. Part of the 30S ribosomal subunit. Contacts proteins S9 and S11.

Functionally, one of the primary rRNA binding proteins, it binds directly to 16S rRNA where it nucleates assembly of the head domain of the 30S subunit. Is located at the subunit interface close to the decoding center, probably blocks exit of the E-site tRNA. This chain is Small ribosomal subunit protein uS7 (rspG), found in Streptomyces coelicolor (strain ATCC BAA-471 / A3(2) / M145).